Here is a 397-residue protein sequence, read N- to C-terminus: uncharacterized protein (397 aa).

A run of 4 helical transmembrane segments spans residues 255–275 (LLTYGISLTIISIFLYMICYA), 284–304 (MITFQWILFTGGLSALGVLLA), 308–328 (LITALVAFLSAPITTLVPLPL), and 370–390 (VLLVATLSNLGASIGVFYCLG).

Its subcellular location is the cell membrane. This is an uncharacterized protein from Methanocaldococcus jannaschii (strain ATCC 43067 / DSM 2661 / JAL-1 / JCM 10045 / NBRC 100440) (Methanococcus jannaschii).